The sequence spans 176 residues: MNEVVAKKYVKAILSDVNSAQLAKFISNLSEISAAFEIEKFRNIISLPTLKNSAKAEFILSLVQDPSENFKNFIKLLGANKRLSLIPAILNEIKSEQTLLDNIYHGSVYGNFELNGEQLSALEDKFSKRFDAKVKLGGSKSDYNGIKVELDDLGVEASFSMDRLKTQMSEYILKAI.

Belongs to the ATPase delta chain family. In terms of assembly, F-type ATPases have 2 components, F(1) - the catalytic core - and F(0) - the membrane proton channel. F(1) has five subunits: alpha(3), beta(3), gamma(1), delta(1), epsilon(1). F(0) has three main subunits: a(1), b(2) and c(10-14). The alpha and beta chains form an alternating ring which encloses part of the gamma chain. F(1) is attached to F(0) by a central stalk formed by the gamma and epsilon chains, while a peripheral stalk is formed by the delta and b chains.

The protein localises to the cell inner membrane. F(1)F(0) ATP synthase produces ATP from ADP in the presence of a proton or sodium gradient. F-type ATPases consist of two structural domains, F(1) containing the extramembraneous catalytic core and F(0) containing the membrane proton channel, linked together by a central stalk and a peripheral stalk. During catalysis, ATP synthesis in the catalytic domain of F(1) is coupled via a rotary mechanism of the central stalk subunits to proton translocation. In terms of biological role, this protein is part of the stalk that links CF(0) to CF(1). It either transmits conformational changes from CF(0) to CF(1) or is implicated in proton conduction. This Campylobacter curvus (strain 525.92) protein is ATP synthase subunit delta.